A 67-amino-acid polypeptide reads, in one-letter code: Probable Sec-independent protein translocase protein TatE (67 aa).

A helical transmembrane segment spans residues 4–21 (ISITKLLVIAALVVLLFG).

This sequence belongs to the TatA/E family. TatE subfamily.

Its subcellular location is the cell inner membrane. Functionally, part of the twin-arginine translocation (Tat) system that transports large folded proteins containing a characteristic twin-arginine motif in their signal peptide across membranes. TatE shares overlapping functions with TatA. This is Probable Sec-independent protein translocase protein TatE from Citrobacter rodentium (strain ICC168) (Citrobacter freundii biotype 4280).